The primary structure comprises 781 residues: MSKKSGKWWESDDKFAKAVYQQFVEFYEKVTGTDLELIQILKDHYNISLDNPLENPSSLFDLVARIKNNLKNSPDLYSHHFQSHGQLSDHPHALSSSSSHAEPRGENAVLSSEDLHKPGQVSVQLPGTNYVGPGNELQAGPPQSAVDSAARIHDFRYSQLAKLGINPYTHWTVADEELLKNIKNETGFQAQVVKDYFTLKGAAAPVAHFQGSLPEVPAYNASEKYPSMTSVNSAEASTGAGGGGSNSVKSMWSEGATFSANSVTCTFSRQFLIPYDPEHHYKVFSPAASSCHNASGKEAKVCTISPIMGYSTPWRYLDFNALNLFFSPLEFQHLIENYGSIAPDALTVTISEIAVKDVTDKTGGGVQVTDSTTGRLCMLVDHEYKYPYVLGQGQDTLAPELPIWVYFPPQYAYLTVGDVNTQGISGDSKKLASEESAFYVLEHSSFQLLGTGGTASMSYKFPPVPPENLEGCSQHFYEMYNPLYGSRLGVPDTLGGDPKFRSLTHEDHAIQPQNFMPGPLVNSVSTKEGDSSNTGAGKALTGLSTGTSQNTRISLRPGPVSQPYHHWDTDKYVTGINAISHGQTTYGNAEDKEYQQGVGRFPNEKEQLKQLQGLNMHTYFPNKGTQQYTDQIERPLMVGSVWNRRALHYESQLWSKIPNLDDSFKTQFAALGGWGLHQPPPQIFLKILPQSGPIGGIKSMGITTLVQYAVGIMTVTMTFKLGPRKATGRWNPQPGVYPPHAAGHLPYVLYDPTATDAKQHHRHGYEKPEELWTAKSRVHPL.

The segment at 5–80 is binding to the host cell receptor and internalization; sequence SGKWWESDDK…KNSPDLYSHH (76 aa). Residues 77 to 111 form a disordered region; sequence YSHHFQSHGQLSDHPHALSSSSSHAEPRGENAVLS. The interval 130–175 is phospholipase A2-like; sequence YVGPGNELQAGPPQSAVDSAARIHDFRYSQLAKLGINPYTHWTVAD. Polar residues-rich tracts occupy residues 524–535 and 542–553; these read VSTKEGDSSNTG and GLSTGTSQNTRI. Positions 524–561 are disordered; that stretch reads VSTKEGDSSNTGAGKALTGLSTGTSQNTRISLRPGPVS. Positions 720–730 match the Nuclear localization signal motif; that stretch reads KLGPRKATGRW. Residues 761–781 are disordered; sequence HRHGYEKPEELWTAKSRVHPL.

This sequence belongs to the parvoviridae capsid protein family. As to quaternary structure, heteromultimer of isoform Minor capsid protein VP1 and isoform Major capsid protein VP2. In terms of assembly, heteromultimer of isoform Minor capsid protein VP1 and isoform Major capsid protein VP2. 20 fold more abundant than the minor capsid protein VP1.

The protein resides in the virion. Its subcellular location is the host nucleus. The protein localises to the host cytoplasm. It catalyses the reaction a 1,2-diacyl-sn-glycero-3-phosphocholine + H2O = a 1-acyl-sn-glycero-3-phosphocholine + a fatty acid + H(+). In terms of biological role, capsid protein self-assembles to form an icosahedral capsid with a T=1 symmetry, about 20 nm in diameter, and consisting of 60 copies of two size variants of the capsid proteins, VP1 and VP2, which differ by the presence of an N-terminal extension in the minor protein VP1. The capsid encapsulates the genomic ssDNA. Binds to erythroid progenitor cells expressing high levels of P antigen and uses host ITGA5-ITGB1 and XRCC5/Ku80 autoantigen as coreceptors on the cell surface to provide virion attachment to target cell. This attachment induces virion internalization predominantly through clathrin-dependent endocytosis. Binding to the host receptors also induces capsid rearrangements leading to surface exposure of VP1 N-terminus, specifically its phospholipase A2-like region. The additional N-terminal region of isoform Minor capsid protein VP1, called VP1u, may serve as a lipolytic enzyme to breach the endosomal membrane during entry into host cell and might contribute to virus transport to the nucleus. This chain is Minor capsid protein VP1, found in Homo sapiens (Human).